The primary structure comprises 524 residues: Bifunctional purine biosynthesis protein PurH (524 aa).

The region spanning 1–149 (MSDPLIKRAL…KNNESVTVLT (149 aa)) is the MGS-like domain.

Belongs to the PurH family.

The catalysed reaction is (6R)-10-formyltetrahydrofolate + 5-amino-1-(5-phospho-beta-D-ribosyl)imidazole-4-carboxamide = 5-formamido-1-(5-phospho-D-ribosyl)imidazole-4-carboxamide + (6S)-5,6,7,8-tetrahydrofolate. The enzyme catalyses IMP + H2O = 5-formamido-1-(5-phospho-D-ribosyl)imidazole-4-carboxamide. The protein operates within purine metabolism; IMP biosynthesis via de novo pathway; 5-formamido-1-(5-phospho-D-ribosyl)imidazole-4-carboxamide from 5-amino-1-(5-phospho-D-ribosyl)imidazole-4-carboxamide (10-formyl THF route): step 1/1. Its pathway is purine metabolism; IMP biosynthesis via de novo pathway; IMP from 5-formamido-1-(5-phospho-D-ribosyl)imidazole-4-carboxamide: step 1/1. This is Bifunctional purine biosynthesis protein PurH from Chlorobium luteolum (strain DSM 273 / BCRC 81028 / 2530) (Pelodictyon luteolum).